A 232-amino-acid chain; its full sequence is Adenosylcobinamide-GDP ribazoletransferase (232 aa).

Transmembrane regions (helical) follow at residues 32–52, 54–74, 102–122, 126–146, 172–192, and 212–232; these read PIYF…GGSF, NFLL…LFHF, VGPF…TLYL, PITF…LMFF, FFLL…VVTV, and DVLG…LGVV.

This sequence belongs to the CobS family. It depends on Mg(2+) as a cofactor.

It localises to the cell inner membrane. It catalyses the reaction alpha-ribazole + adenosylcob(III)inamide-GDP = adenosylcob(III)alamin + GMP + H(+). The enzyme catalyses alpha-ribazole 5'-phosphate + adenosylcob(III)inamide-GDP = adenosylcob(III)alamin 5'-phosphate + GMP + H(+). Its pathway is cofactor biosynthesis; adenosylcobalamin biosynthesis; adenosylcobalamin from cob(II)yrinate a,c-diamide: step 7/7. Functionally, joins adenosylcobinamide-GDP and alpha-ribazole to generate adenosylcobalamin (Ado-cobalamin). Also synthesizes adenosylcobalamin 5'-phosphate from adenosylcobinamide-GDP and alpha-ribazole 5'-phosphate. This chain is Adenosylcobinamide-GDP ribazoletransferase, found in Thermosipho melanesiensis (strain DSM 12029 / CIP 104789 / BI429).